The primary structure comprises 343 residues: MPISCKSQCGNRAVLKRPKTGDALCKECFFAAFEAEIHHTISSSNLFRLGEKVAVAASGGKDSTVLAHVLKLLNERHNYGLELVLLSIDEGITGYRDDSLETVKQNRDDYQMPLKILSYEELYGWTMDRIVAQIGRSNNCTFCGVFRRQALDRGAKLLGVDSIATGHNADDIAETVLMNVLRGDTARLRRCTSIRTGGGEDTIPRVKPLKYSYEKEIVMYAHYKKLVYFSTECVFAPNAYRGHARAFLKDLEKVRPSVIMDIIYSGEQLRFKDTVKKPERGTCIRCGFVSSQQPCKACVLLEGLNRGLPKLGIGKKSKGERMIAKQDQELALRERAHLVKNDF.

It belongs to the TtcA family. CTU1/NCS6/ATPBD3 subfamily.

The protein localises to the cytoplasm. The protein operates within tRNA modification; 5-methoxycarbonylmethyl-2-thiouridine-tRNA biosynthesis. Its function is as follows. Plays a central role in 2-thiolation of mcm(5)S(2)U at tRNA wobble positions of tRNA(Lys), tRNA(Glu) and tRNA(Gln). Directly binds tRNAs and probably acts by catalyzing adenylation of tRNAs, an intermediate required for 2-thiolation. It is unclear whether it acts as a sulfurtransferase that transfers sulfur from thiocarboxylated URM1 onto the uridine of tRNAs at wobble position. In Drosophila yakuba (Fruit fly), this protein is Cytoplasmic tRNA 2-thiolation protein 1.